Reading from the N-terminus, the 270-residue chain is 3-phenylpropionate-dihydrodiol/cinnamic acid-dihydrodiol dehydrogenase (270 aa).

10–34 serves as a coordination point for NAD(+); it reads FITGGGSGLGLALVERFIEEGAQVA. S143 lines the substrate pocket. The active-site Proton acceptor is Y156.

The protein belongs to the short-chain dehydrogenases/reductases (SDR) family.

The catalysed reaction is 3-(cis-5,6-dihydroxycyclohexa-1,3-dien-1-yl)propanoate + NAD(+) = 3-(2,3-dihydroxyphenyl)propanoate + NADH + H(+). The enzyme catalyses (2E)-3-(cis-5,6-dihydroxycyclohexa-1,3-dien-1-yl)prop-2-enoate + NAD(+) = (2E)-3-(2,3-dihydroxyphenyl)prop-2-enoate + NADH + H(+). Its pathway is aromatic compound metabolism; 3-phenylpropanoate degradation. Its function is as follows. Converts 3-phenylpropionate-dihydrodiol (PP-dihydrodiol) and cinnamic acid-dihydrodiol (CI-dihydrodiol) into 3-(2,3-dihydroxylphenyl)propanoic acid (DHPP) and 2,3-dihydroxicinnamic acid (DHCI), respectively. This chain is 3-phenylpropionate-dihydrodiol/cinnamic acid-dihydrodiol dehydrogenase, found in Escherichia coli O17:K52:H18 (strain UMN026 / ExPEC).